The sequence spans 709 residues: Golgin-84 (709 aa).

At 1-664 the chain is on the cytoplasmic side; sequence MASWLKVAED…RATRFLWRHP (664 aa). 3 disordered regions span residues 24 to 132, 144 to 195, and 211 to 265; these read TELS…VVDR, EVEV…NQDA, and EVIH…DQLE. Residues 29–43 are compositionally biased toward low complexity; the sequence is EQSSPQPSGSSSQEG. Basic and acidic residues predominate over residues 78-89; that stretch reads PPRERIKIEKIR. Residues 94-113 are compositionally biased toward low complexity; sequence VDSSSVDASASKPDVSSSDV. Residues 114–132 are compositionally biased toward basic and acidic residues; that stretch reads KGLDDDGGAEKEEKVVVDR. Positions 162 to 180 are enriched in low complexity; sequence DGAADSGNSEGAAESSAPS. Composition is skewed to basic and acidic residues over residues 211–222 and 248–265; these read EVIHEKNIKEVP and QQEH…DQLE. Positions 287 to 592 form a coiled coil; it reads RVCAGLSSRL…AALEFQLEKS (306 aa). A helical; Signal-anchor for type II membrane protein transmembrane segment spans residues 665–684; that stretch reads VARVSLLFYLVFVHLFLMYL. Topologically, residues 685–707 are lumenal; it reads MHRLQDFASREGPTAMGGLANSD.

It is found in the golgi apparatus membrane. In terms of biological role, may be involved in maintaining Golgi structure and in intra-Golgi transport. This Oryza sativa subsp. japonica (Rice) protein is Golgin-84.